The following is a 218-amino-acid chain: YlmG homolog protein 1-2, chloroplastic (218 aa).

The transit peptide at 1–83 (MASFTTNSLA…TRSITTLVLL (83 aa)) directs the protein to the chloroplast. A run of 2 helical transmembrane segments spans residues 133-153 (LTVV…VLMV) and 187-207 (IIPP…AVLG).

Belongs to the YggT family.

Its subcellular location is the plastid. The protein resides in the chloroplast thylakoid membrane. In terms of biological role, not required for the biogenesis and accumulation of native cytochrome b6 in the thylakoid membrane. Not functionally involved in the pathway for covalent binding of the c-type heme to cytochrome b6. This is YlmG homolog protein 1-2, chloroplastic from Arabidopsis thaliana (Mouse-ear cress).